A 132-amino-acid polypeptide reads, in one-letter code: Peptide methionine sulfoxide reductase MsrB (132 aa).

The MsrB domain occupies 9–131 (DAQWRAELSP…NSASLSFHPK (123 aa)). Zn(2+)-binding residues include C48, C51, C97, and C100. C120 (nucleophile) is an active-site residue.

The protein belongs to the MsrB Met sulfoxide reductase family. Zn(2+) is required as a cofactor.

It catalyses the reaction L-methionyl-[protein] + [thioredoxin]-disulfide + H2O = L-methionyl-(R)-S-oxide-[protein] + [thioredoxin]-dithiol. The chain is Peptide methionine sulfoxide reductase MsrB from Thiobacillus denitrificans (strain ATCC 25259 / T1).